The primary structure comprises 543 residues: T-complex protein 1 subunit eta (543 aa).

Met-1 carries the N-acetylmethionine modification. ADP is bound at residue Gly-41. Gly-41 serves as a coordination point for ATP. Lys-67 carries the N6-acetyllysine modification. Asp-92 provides a ligand contact to Mg(2+). Residues Gly-93, Thr-94, Thr-95, Ser-96, Ser-164, and Ser-165 each coordinate ADP. Gly-93 contacts ATP. Ser-96 lines the ATP pocket. Residues Lys-250 and Lys-320 each carry the N6-acetyllysine modification. The ATP site is built by Arg-398 and Gly-409. Gly-409 contributes to the ADP binding site. Residue Lys-430 forms a Glycyl lysine isopeptide (Lys-Gly) (interchain with G-Cter in SUMO2) linkage. Residues Glu-494 and Arg-499 each contribute to the ADP site. Arg-499 contacts ATP. Position 535 is an omega-N-methylarginine (Arg-535).

The protein belongs to the TCP-1 chaperonin family. In terms of assembly, component of the chaperonin-containing T-complex (TRiC), a hexadecamer composed of two identical back-to-back stacked rings enclosing a protein folding chamber. Each ring is made up of eight different subunits: TCP1/CCT1, CCT2, CCT3, CCT4, CCT5, CCT6A/CCT6, CCT7, CCT8. Interacts with PACRG. Interacts with DLEC1.

Its subcellular location is the cytoplasm. It carries out the reaction ATP + H2O = ADP + phosphate + H(+). Its function is as follows. Component of the chaperonin-containing T-complex (TRiC), a molecular chaperone complex that assists the folding of actin, tubulin and other proteins upon ATP hydrolysis. The TRiC complex mediates the folding of WRAP53/TCAB1, thereby regulating telomere maintenance. The sequence is that of T-complex protein 1 subunit eta (CCT7) from Pongo abelii (Sumatran orangutan).